A 166-amino-acid chain; its full sequence is NADH-quinone oxidoreductase subunit I (166 aa).

4Fe-4S ferredoxin-type domains are found at residues 57–87 (LRRYPNGEERCIACKLCEAVCPALAITIESE) and 97–126 (TRYDIDMFKCINCGLCEESCPVDSIVVTPI). Positions 67, 70, 73, 77, 106, 109, 112, and 116 each coordinate [4Fe-4S] cluster.

The protein belongs to the complex I 23 kDa subunit family. NDH-1 is composed of 14 different subunits. Subunits NuoA, H, J, K, L, M, N constitute the membrane sector of the complex. Requires [4Fe-4S] cluster as cofactor.

The protein localises to the cell inner membrane. It carries out the reaction a quinone + NADH + 5 H(+)(in) = a quinol + NAD(+) + 4 H(+)(out). Its function is as follows. NDH-1 shuttles electrons from NADH, via FMN and iron-sulfur (Fe-S) centers, to quinones in the respiratory chain. The immediate electron acceptor for the enzyme in this species is believed to be ubiquinone. Couples the redox reaction to proton translocation (for every two electrons transferred, four hydrogen ions are translocated across the cytoplasmic membrane), and thus conserves the redox energy in a proton gradient. This Legionella pneumophila (strain Lens) protein is NADH-quinone oxidoreductase subunit I.